The sequence spans 466 residues: cAMP-dependent protein kinase regulatory subunit (466 aa).

The interval 25-231 (QFAANYFTKR…RLEKAVGKNF (207 aa)) is dimerization and phosphorylation. The segment covering 71–80 (ASLSHGSSKA) has biased composition (low complexity). Disordered regions lie at residues 71 to 90 (ASLSHGSSKANASQSGISSS), 109 to 139 (STHIVDHLDSTHSNTTASPAKASGGDAPGIF), 154 to 179 (NSSVDPMAPEPTATTHSFPRRSVVNP), and 193 to 218 (SVSGETLQPDHLDDWKPENFQEKSPE). The segment covering 81 to 90 (NASQSGISSS) has biased composition (polar residues). The segment covering 109–118 (STHIVDHLDS) has biased composition (basic and acidic residues). A Phosphoserine modification is found at Ser-193. Over residues 200–218 (QPDHLDDWKPENFQEKSPE) the composition is skewed to basic and acidic residues. 3',5'-cyclic AMP is bound by residues 232 to 347 (LFNK…LLKN), Glu-297, Arg-306, 350 to 466 (ILKS…RSKH), Glu-416, and Arg-425.

The protein belongs to the cAMP-dependent kinase regulatory chain family. In terms of assembly, tetramer, composed of 2 regulatory (R) and 2 catalytic (C) subunits. In the presence of cAMP it dissociates into 2 active monomeric C subunits and an R dimer.

The protein is cAMP-dependent protein kinase regulatory subunit (PKAR) of Kluyveromyces lactis (strain ATCC 8585 / CBS 2359 / DSM 70799 / NBRC 1267 / NRRL Y-1140 / WM37) (Yeast).